Here is a 278-residue protein sequence, read N- to C-terminus: Glutamate racemase (278 aa).

Substrate-binding positions include 13 to 14 (DS) and 45 to 46 (YG). Cys76 functions as the Proton donor/acceptor in the catalytic mechanism. Substrate is bound at residue 77 to 78 (NT). The active-site Proton donor/acceptor is Cys185. 186-187 (TH) lines the substrate pocket.

It belongs to the aspartate/glutamate racemases family.

It carries out the reaction L-glutamate = D-glutamate. The protein operates within cell wall biogenesis; peptidoglycan biosynthesis. In terms of biological role, provides the (R)-glutamate required for cell wall biosynthesis. The polypeptide is Glutamate racemase (Gloeothece citriformis (strain PCC 7424) (Cyanothece sp. (strain PCC 7424))).